Here is an 80-residue protein sequence, read N- to C-terminus: Calmodulin (80 aa).

EF-hand domains follow at residues Asp12–Lys47 and Leu48–Lys80. Ca(2+)-binding residues include Asp25, Asp27, Asn29, Glu36, Asp61, Asp63, Asp65, Gln67, and Glu72.

This sequence belongs to the calmodulin family.

Its function is as follows. Calmodulin mediates the control of a large number of enzymes, ion channels and other proteins by Ca(2+). Among the enzymes to be stimulated by the calmodulin-Ca(2+) complex are a number of protein kinases and phosphatases. The sequence is that of Calmodulin from Strongylocentrotus purpuratus (Purple sea urchin).